Reading from the N-terminus, the 91-residue chain is Putative membrane protein insertion efficiency factor (91 aa).

Belongs to the UPF0161 family.

The protein resides in the cell inner membrane. Functionally, could be involved in insertion of integral membrane proteins into the membrane. The polypeptide is Putative membrane protein insertion efficiency factor (Saccharophagus degradans (strain 2-40 / ATCC 43961 / DSM 17024)).